A 319-amino-acid chain; its full sequence is F-box only protein 8 (319 aa).

The F-box domain occupies 68–111 (FINLEMLPPELSFTILSYLNATDLCLASCVWQDLANDELLWQGL). An SEC7 domain is found at 146–276 (FNANPDEGVN…LILLSIDLTS (131 aa)).

May promote guanine-nucleotide exchange on an ARF. Promotes the activation of ARF through replacement of GDP with GTP (Potential). This Bos taurus (Bovine) protein is F-box only protein 8 (FBXO8).